A 1050-amino-acid chain; its full sequence is MDTSHEIHDKIPDTLREQQQHLRQKESEGCITTLKDLNVPETKKLSSVLHGRKASTYLRIFRDDECLADNNNGVDSNNGGSVTCADKITRSEATPKSVPEGLQVSEKKNNPDTLSSSLSSFILSNHEEPAIKPNKHVAHRNNITETGQGSGEDIAKQQSHQPQVLHHQTSLKPIQNVDEGCISPKSTYQESLHGISEDLTLKPVSSATYYPHKSKADSGYEEKDKMENDIDTIQPATINCASGIATLPSSYNRHTFKVKTYSTLSQSLRQENVNNRSNEKKPQQFVPHSESIKEKPNTFEQDKEGEQADEEEDEGDNEHREYPLAVELKPFTNRVGGHTAIFRFSKRAVCKALVNRENRWYENIELCHKELLQFMPRYIGVLNVRQHFQSKDDFLSDLDQENNGKNDTSNENKDIEVNHNNNDDIALNTEPTGTPLTHIHSFPLEHSSRQVLEKEHPEIESVHPHVKRSLSSSNQPSLLPEVVLNDNRHIIPESLWYKYSDSPNSAPNDSYFSSSSSHNSCSFGERGNTNKLKRRDSGSTMINTELKNLVIREVFAPKCFRRKRNSNTTTMGNHNARLGSSPSFLTQKSRASSHDASNTSMKTLGDSSSQASLQMDDSKVNPNLQDPFLKKSLHEKISNALDGSHSVMDLKQFHKNEQIKHKNSFCNSLSPILTATNSRDDGEFATSPNYISNAQDGVFDMDEDTGNETINMDNHGCHLDSGKNMIIKSLAYNVSNDYSHHDIESITFEETSHTIVSKFILLEDLTRNMNKPCALDLKMGTRQYGVDAKRAKQLSQRAKCLKTTSRRLGVRICGLKVWNKDYYITRDKYFGRRVKVGWQFARVLARFLYDGKTIESLIRQIPRLIKQLDTLYSEIFNLKGYRLYGASLLLMYDGDANKSNSKRKKAANVKVNLIDFARCVTKEDAMECMDKFRIPPKSPNIEDKGFLRGVKSLRFYLLLIWNYLTSDMPLIFDEVEMNDMISEEADSNSFTSATGSKINFNSKWDWLDEFDKEDEEMYNDPNSKLRQKWRKYELIFDAEPRYNDDAQVSD.

4 disordered regions span residues 87–117 (KITR…LSSS), 129–177 (PAIK…IQNV), 269–319 (RQEN…DNEH), and 396–423 (SDLD…NNND). Residue S150 is modified to Phosphoserine. Residues 156 to 173 (KQQSHQPQVLHHQTSLKP) are compositionally biased toward polar residues. Basic and acidic residues predominate over residues 290-306 (ESIKEKPNTFEQDKEGE). Acidic residues predominate over residues 307 to 316 (QADEEEDEGD). S396 carries the post-translational modification Phosphoserine. Residues 402–417 (NNGKNDTSNENKDIEV) show a composition bias toward basic and acidic residues. Position 469 is a phosphoserine (S469). Positions 508 to 522 (NDSYFSSSSSHNSCS) are enriched in low complexity. Disordered regions lie at residues 508-539 (NDSY…DSGS) and 562-625 (RKRN…PNLQ). S537, S539, S566, S583, S589, S646, S664, and S670 each carry phosphoserine. Polar residues predominate over residues 566–624 (SNTTTMGNHNARLGSSPSFLTQKSRASSHDASNTSMKTLGDSSSQASLQMDDSKVNPNL). 772–780 (PCALDLKMG) lines the substrate pocket.

Belongs to the inositol phosphokinase (IPK) family.

It localises to the cytoplasm. The enzyme catalyses 1D-myo-inositol hexakisphosphate + ATP = 5-diphospho-1D-myo-inositol 1,2,3,4,6-pentakisphosphate + ADP. It catalyses the reaction 1-diphospho-1D-myo-inositol 2,3,4,5,6-pentakisphosphate + ATP + H(+) = 1,5-bis(diphospho)-1D-myo-inositol 2,3,4,6-tetrakisphosphate + ADP. In terms of biological role, converts inositol hexakisphosphate (InsP6) to diphosphoinositol pentakisphosphate (InsP7/PP-InsP5). Involved in phosphate regulation and polyphosphate accumulation. Required for resistance to salt stress, cell wall integrity, vacuole morphogenesis, and telomere maintenance. In Saccharomyces cerevisiae (strain ATCC 204508 / S288c) (Baker's yeast), this protein is Inositol hexakisphosphate kinase 1 (KCS1).